A 331-amino-acid polypeptide reads, in one-letter code: MNLDTTTIDSIVAQAEVAIAQASDPTALDQVRVNFLGKKGLFTEQMKGLGKLPKEEKPKMGQVINIAKQAVQKLLTERGELLRAQEIKEKLAAESIDVTLPGRGTQIGGLHPVTRTIARIESFFGDLGFEVKDGPEVEDDYHNFDALNIPEHHPARQDHDTFYFNPKLVLRTQTSGVQIRTMEVEQPPLRIISPGKVYRNDYDQTHTPMFHQVEGLMVDKDVSFTHLKGILHDFLHHFFEEEVEIRFRPSYFPFTEPSAEVDIMGKNGKWLEVLGCGMVHPNVLRSVGIDPEVYTGFAFGMGVERLTMLRYGVNDLRAFFENDLRFLKQFK.

Glutamate 256 is a binding site for Mg(2+).

It belongs to the class-II aminoacyl-tRNA synthetase family. Phe-tRNA synthetase alpha subunit type 1 subfamily. Tetramer of two alpha and two beta subunits. The cofactor is Mg(2+).

It localises to the cytoplasm. It catalyses the reaction tRNA(Phe) + L-phenylalanine + ATP = L-phenylalanyl-tRNA(Phe) + AMP + diphosphate + H(+). The sequence is that of Phenylalanine--tRNA ligase alpha subunit from Colwellia psychrerythraea (strain 34H / ATCC BAA-681) (Vibrio psychroerythus).